Here is a 152-residue protein sequence, read N- to C-terminus: Lipoprotein signal peptidase (152 aa).

The next 2 membrane-spanning stretches (helical) occupy residues 55–75 (NKMW…VFYM) and 85–105 (LGIS…DRVF). Active-site residues include Asp-111 and Asp-129. A helical transmembrane segment spans residues 124–144 (VFNIADSALCIGVVLIIIQTV).

Belongs to the peptidase A8 family.

The protein resides in the cell membrane. The catalysed reaction is Release of signal peptides from bacterial membrane prolipoproteins. Hydrolyzes -Xaa-Yaa-Zaa-|-(S,diacylglyceryl)Cys-, in which Xaa is hydrophobic (preferably Leu), and Yaa (Ala or Ser) and Zaa (Gly or Ala) have small, neutral side chains.. The protein operates within protein modification; lipoprotein biosynthesis (signal peptide cleavage). This protein specifically catalyzes the removal of signal peptides from prolipoproteins. This chain is Lipoprotein signal peptidase, found in Bacillus mycoides (strain KBAB4) (Bacillus weihenstephanensis).